Here is an 84-residue protein sequence, read N- to C-terminus: Turripeptide IX-03 (84 aa).

An N-terminal signal peptide occupies residues 1-21 (MGFYMLLTVALLLTSLMNVEA). A propeptide spanning residues 22-39 (TPVDQAERSALEKSGLGN) is cleaved from the precursor. Disulfide bonds link Cys-48-Cys-70, Cys-55-Cys-74, and Cys-60-Cys-81.

As to expression, expressed by the venom duct.

The protein resides in the secreted. This is Turripeptide IX-03 from Gemmula speciosa (Splendid gem-turris).